Reading from the N-terminus, the 883-residue chain is Phosphoenolpyruvate carboxylase (883 aa).

Active-site residues include His138 and Lys546.

The protein belongs to the PEPCase type 1 family. It depends on Mg(2+) as a cofactor.

The catalysed reaction is oxaloacetate + phosphate = phosphoenolpyruvate + hydrogencarbonate. Forms oxaloacetate, a four-carbon dicarboxylic acid source for the tricarboxylic acid cycle. This Enterobacter sp. (strain 638) protein is Phosphoenolpyruvate carboxylase.